Here is a 428-residue protein sequence, read N- to C-terminus: Phosphomethylpyrimidine synthase (428 aa).

Residues N66, M95, Y124, H163, 185 to 187 (SRG), 226 to 229 (DGLR), and E265 each bind substrate. Zn(2+) is bound at residue H269. Residue Y292 participates in substrate binding. H333 contacts Zn(2+). [4Fe-4S] cluster is bound by residues C407, C410, and C414.

Belongs to the ThiC family. The cofactor is [4Fe-4S] cluster.

It carries out the reaction 5-amino-1-(5-phospho-beta-D-ribosyl)imidazole + S-adenosyl-L-methionine = 4-amino-2-methyl-5-(phosphooxymethyl)pyrimidine + CO + 5'-deoxyadenosine + formate + L-methionine + 3 H(+). Its pathway is cofactor biosynthesis; thiamine diphosphate biosynthesis. Its function is as follows. Catalyzes the synthesis of the hydroxymethylpyrimidine phosphate (HMP-P) moiety of thiamine from aminoimidazole ribotide (AIR) in a radical S-adenosyl-L-methionine (SAM)-dependent reaction. In Thermococcus kodakarensis (strain ATCC BAA-918 / JCM 12380 / KOD1) (Pyrococcus kodakaraensis (strain KOD1)), this protein is Phosphomethylpyrimidine synthase.